The primary structure comprises 483 residues: Bifunctional pantoate ligase/cytidylate kinase (483 aa).

Residues 1–246 (MPTMGALHAG…CGSTRLIDHA (246 aa)) are pantoate--beta-alanine ligase. ATP is bound at residue 4-11 (MGALHAGH). The active-site Proton donor is the His11. Gln34 is a binding site for (R)-pantoate. Gln34 serves as a coordination point for beta-alanine. 124 to 127 (GEKD) is an ATP binding site. A (R)-pantoate-binding site is contributed by Gln130. ATP is bound by residues Val153 and 161–164 (LSSR). The interval 247–483 (FLMTRQPLVA…AEEAWPTPQR (237 aa)) is cytidylate kinase.

This sequence in the N-terminal section; belongs to the pantothenate synthetase family. In the C-terminal section; belongs to the cytidylate kinase family. Type 1 subfamily.

The protein localises to the cytoplasm. It catalyses the reaction (R)-pantoate + beta-alanine + ATP = (R)-pantothenate + AMP + diphosphate + H(+). It carries out the reaction CMP + ATP = CDP + ADP. The catalysed reaction is dCMP + ATP = dCDP + ADP. It participates in cofactor biosynthesis; (R)-pantothenate biosynthesis; (R)-pantothenate from (R)-pantoate and beta-alanine: step 1/1. Functionally, catalyzes the condensation of pantoate with beta-alanine in an ATP-dependent reaction via a pantoyl-adenylate intermediate. In terms of biological role, catalyzes the transfer of a phosphate group from ATP to either CMP or dCMP to form CDP or dCDP and ADP, respectively. The polypeptide is Bifunctional pantoate ligase/cytidylate kinase (Synechococcus sp. (strain CC9902)).